The sequence spans 355 residues: Alanine racemase (355 aa).

Lys34 (proton acceptor; specific for D-alanine) is an active-site residue. N6-(pyridoxal phosphate)lysine is present on Lys34. Arg133 lines the substrate pocket. The active-site Proton acceptor; specific for L-alanine is Tyr249. Residue Met297 participates in substrate binding.

This sequence belongs to the alanine racemase family. Pyridoxal 5'-phosphate is required as a cofactor.

The catalysed reaction is L-alanine = D-alanine. It participates in amino-acid biosynthesis; D-alanine biosynthesis; D-alanine from L-alanine: step 1/1. Catalyzes the interconversion of L-alanine and D-alanine. May also act on other amino acids. This is Alanine racemase (alr) from Rickettsia canadensis (strain McKiel).